An 89-amino-acid chain; its full sequence is Small ribosomal subunit protein uS15 (89 aa).

This sequence belongs to the universal ribosomal protein uS15 family. In terms of assembly, part of the 30S ribosomal subunit. Forms a bridge to the 50S subunit in the 70S ribosome, contacting the 23S rRNA.

One of the primary rRNA binding proteins, it binds directly to 16S rRNA where it helps nucleate assembly of the platform of the 30S subunit by binding and bridging several RNA helices of the 16S rRNA. Functionally, forms an intersubunit bridge (bridge B4) with the 23S rRNA of the 50S subunit in the ribosome. In Agrobacterium fabrum (strain C58 / ATCC 33970) (Agrobacterium tumefaciens (strain C58)), this protein is Small ribosomal subunit protein uS15.